The following is a 280-amino-acid chain: Probable 2-(5''-triphosphoribosyl)-3'-dephosphocoenzyme-A synthase (280 aa).

This sequence belongs to the CitG/MdcB family.

It catalyses the reaction 3'-dephospho-CoA + ATP = 2'-(5''-triphospho-alpha-D-ribosyl)-3'-dephospho-CoA + adenine. The chain is Probable 2-(5''-triphosphoribosyl)-3'-dephosphocoenzyme-A synthase from Lactiplantibacillus plantarum (strain ATCC BAA-793 / NCIMB 8826 / WCFS1) (Lactobacillus plantarum).